A 118-amino-acid polypeptide reads, in one-letter code: DNA polymerase epsilon subunit 4 (118 aa).

2 stretches are compositionally biased toward low complexity: residues 1–11 and 19–35; these read MAAAAAAGSGT and GGEAAASQAQAPTSAPG. A disordered region spans residues 1–37; sequence MAAAAAAGSGTPREEEAPGGEAAASQAQAPTSAPGGV. Ala2 is modified (N-acetylalanine). At Thr11 the chain carries Phosphothreonine. Residue Ser25 is modified to Phosphoserine.

In terms of assembly, component of the DNA polymerase epsilon complex consisting of four subunits: the catalytic subunit POLE and the accessory subunits POLE2, POLE3 and POLE4. Interaction with POLE3 is a prerequisite for further binding with POLE and POLE2.

The protein resides in the nucleus. Accessory component of the DNA polymerase epsilon complex. Participates in DNA repair and in chromosomal DNA replication. The chain is DNA polymerase epsilon subunit 4 (Pole4) from Mus musculus (Mouse).